The following is an 82-amino-acid chain: uncharacterized protein (82 aa).

A disordered region spans residues 60-82; that stretch reads YKRRRPDHMMKRNSPSYTGDHKT.

This is an uncharacterized protein from Saccharomyces cerevisiae (strain ATCC 204508 / S288c) (Baker's yeast).